Here is a 294-residue protein sequence, read N- to C-terminus: GTPase Era (294 aa).

The Era-type G domain occupies 4-170; sequence KSGFVSVIGR…VEEIFTFLPE (167 aa). Positions 12 to 19 are G1; the sequence is GRPNVGKS. GTP is bound at residue 12–19; that stretch reads GRPNVGKS. Residues 38–42 form a G2 region; that stretch reads QTTRN. Residues 59-62 are G3; the sequence is DTPG. Residues 59 to 63 and 121 to 124 contribute to the GTP site; these read DTPGI and NKID. The segment at 121 to 124 is G4; it reads NKID. The interval 149-151 is G5; that stretch reads ISA. The region spanning 201–278 is the KH type-2 domain; sequence TREEVPYGVA…YLDLWVKIEK (78 aa).

Belongs to the TRAFAC class TrmE-Era-EngA-EngB-Septin-like GTPase superfamily. Era GTPase family. Monomer.

The protein localises to the cytoplasm. Its subcellular location is the cell inner membrane. In terms of biological role, an essential GTPase that binds both GDP and GTP, with rapid nucleotide exchange. Plays a role in 16S rRNA processing and 30S ribosomal subunit biogenesis and possibly also in cell cycle regulation and energy metabolism. The sequence is that of GTPase Era from Halothermothrix orenii (strain H 168 / OCM 544 / DSM 9562).